Consider the following 240-residue polypeptide: Regulatory protein HlyX (240 aa).

Positions 15–28 (CTIHCQNCSISQLC) are essential for the oxygen-regulated activity. The HTH crp-type domain occupies 163–236 (MSAEEKLAAF…GKYITINRMD (74 aa)). Positions 196-215 (RGDIGNYLGLTIETISRLLG) form a DNA-binding region, H-T-H motif.

Its subcellular location is the cytoplasm. Its function is as follows. Confers a hemolytic phenotype on E.coli. May regulate, rather than mediate, hemolytic activity. This chain is Regulatory protein HlyX (hlyX), found in Actinobacillus pleuropneumoniae (Haemophilus pleuropneumoniae).